The chain runs to 381 residues: L-lactate dehydrogenase (381 aa).

Residues 1–380 (MIISASTDYR…SADSLVRELG (380 aa)) form the FMN hydroxy acid dehydrogenase domain. Substrate is bound at residue Tyr-24. Positions 106 and 127 each coordinate FMN. Tyr-129 serves as a coordination point for substrate. Thr-155 provides a ligand contact to FMN. Arg-164 provides a ligand contact to substrate. Residue Lys-251 participates in FMN binding. His-275 acts as the Proton acceptor in catalysis. Arg-278 lines the substrate pocket. Residue 306–330 (DSGIRTGLDVVRMIALGADSVLLGR) participates in FMN binding.

The protein belongs to the FMN-dependent alpha-hydroxy acid dehydrogenase family. Homotetramer. Requires FMN as cofactor.

It localises to the cell inner membrane. The enzyme catalyses (S)-lactate + A = pyruvate + AH2. In terms of biological role, catalyzes the conversion of L-lactate to pyruvate. Is coupled to the respiratory chain. The sequence is that of L-lactate dehydrogenase from Pseudomonas aeruginosa (strain UCBPP-PA14).